We begin with the raw amino-acid sequence, 389 residues long: 5-amino-6-(D-ribitylamino)uracil--L-tyrosine 4-hydroxyphenyl transferase (389 aa).

Residues 56 to 298 (VSYVINRNIN…QAVARLFFGR (243 aa)) enclose the Radical SAM core domain. [4Fe-4S] cluster contacts are provided by C70, C74, and C77.

This sequence belongs to the radical SAM superfamily. CofH family. Consists of two subunits, CofG and CofH. [4Fe-4S] cluster serves as cofactor.

It carries out the reaction 5-amino-6-(D-ribitylamino)uracil + L-tyrosine + S-adenosyl-L-methionine = 5-amino-5-(4-hydroxybenzyl)-6-(D-ribitylimino)-5,6-dihydrouracil + 2-iminoacetate + 5'-deoxyadenosine + L-methionine + H(+). Its pathway is cofactor biosynthesis; coenzyme F0 biosynthesis. Its function is as follows. Catalyzes the radical-mediated synthesis of 5-amino-5-(4-hydroxybenzyl)-6-(D-ribitylimino)-5,6-dihydrouracil from 5-amino-6-(D-ribitylamino)uracil and L-tyrosine. In Gloeobacter violaceus (strain ATCC 29082 / PCC 7421), this protein is 5-amino-6-(D-ribitylamino)uracil--L-tyrosine 4-hydroxyphenyl transferase.